The sequence spans 331 residues: Aflatoxin B1 aldehyde reductase member 4 (331 aa).

Asp44 contributes to the NADP(+) binding site. The Proton donor role is filled by Tyr49. Ser85 carries the phosphoserine modification. A substrate-binding site is contributed by His113. NADP(+) contacts are provided by residues 143–144 (SN), Gln169, 198–208 (NPLAGGLLTGK), and Arg222. A substrate-binding site is contributed by Tyr232. Residue 290 to 298 (SSLEQLEQN) participates in NADP(+) binding.

This sequence belongs to the aldo/keto reductase family. Aldo/keto reductase 2 subfamily. As to expression, mainly expressed in uterus.

Can reduce the dialdehyde protein-binding form of aflatoxin B1 (AFB1) to the non-binding AFB1 dialcohol. May be involved in protection of liver against the toxic and carcinogenic effects of AFB1, a potent hepatocarcinogen. The protein is Aflatoxin B1 aldehyde reductase member 4 (AKR7L) of Homo sapiens (Human).